Reading from the N-terminus, the 498-residue chain is Trehalose-6-phosphate synthase (498 aa).

Position 28 (Arg-28) interacts with D-glucose 6-phosphate. 48 to 49 (GG) serves as a coordination point for UDP-alpha-D-glucose. D-glucose 6-phosphate is bound by residues Tyr-106 and Asp-160. Residues Arg-302 and Lys-307 each contribute to the UDP-alpha-D-glucose site. D-glucose 6-phosphate is bound at residue Arg-340. 405 to 409 (LVAKE) is a UDP-alpha-D-glucose binding site.

It belongs to the glycosyltransferase 20 family. In terms of assembly, homotetramer.

It catalyses the reaction ADP-alpha-D-glucose + D-glucose 6-phosphate = alpha,alpha-trehalose 6-phosphate + ADP + H(+). The enzyme catalyses CDP-alpha-D-glucose + D-glucose 6-phosphate = alpha,alpha-trehalose 6-phosphate + CDP + H(+). It carries out the reaction GDP-alpha-D-glucose + D-glucose 6-phosphate = alpha,alpha-trehalose 6-phosphate + GDP + H(+). The catalysed reaction is TDP-alpha-D-glucose + D-glucose 6-phosphate = 5-methyl-UDP + alpha,alpha-trehalose 6-phosphate + H(+). It catalyses the reaction D-glucose 6-phosphate + UDP-alpha-D-glucose = alpha,alpha-trehalose 6-phosphate + UDP + H(+). It participates in glycan biosynthesis; trehalose biosynthesis. Probably involved in the osmoprotection via the biosynthesis of trehalose and in the production of glycogen and alpha-glucan via the TreS-Pep2 branch involved in the biosynthesis of maltose-1-phosphate (M1P). Catalyzes the transfer of glucose from UDP-glucose (UDP-Glc) to D-glucose 6-phosphate (Glc-6-P) to form trehalose-6-phosphate. Probably also able to use ADP-Glc, CDP-Glc, GDP-Glc and TDP-Glc as glucosyl donors. The polypeptide is Trehalose-6-phosphate synthase (Mycobacterium leprae (strain TN)).